The sequence spans 890 residues: Pentatricopeptide repeat-containing protein At3g57430, chloroplastic (890 aa).

A chloroplast-targeting transit peptide spans 1 to 44; sequence MSCPLAFTFSLPSIFPFPSQLLPFSRHKHPYLLRATPTSATEDV. PPR repeat units lie at residues 61-95, 96-130, 132-162, 163-197, 198-231, 235-265, 266-300, 301-335, 337-371, 372-398, 404-438, 439-473, 474-504, 516-550, 551-581, 582-616, 617-652, and 653-683; these read SPEW…GIKP, DNYA…GYGV, SVTV…ISER, NQVS…NVEP, SSFT…GLRK, NSFI…FGGR, DLVT…GVEP, DEFT…GSLD, NSFV…KIGL, WNAM…MEES, NSTT…GLDR, DRFV…DLVT, WNTM…ERKV, NSIT…NLAT, DVAV…IPQK, NVIT…GVKP, NEVT…GVEP, and SSDH…MPRD. The interval 689–764 is type E motif; that stretch reads AWSSLLGASR…EPGCSWIEHG (76 aa). The interval 765-795 is type E(+) motif; the sequence is DEVHKFVAGDSSHPQSEKLSGYLETLWERMR. The interval 796–890 is type DYW motif; it reads KEGYVPDTSC…NGTCSCGDYW (95 aa).

The protein belongs to the PPR family. PCMP-H subfamily.

It localises to the plastid. The protein resides in the chloroplast. In terms of biological role, involved in RNA editing events in chloroplasts. Required for the editing of a single site in ndhB and ndhF transcripts, which are two plastid-encoded subunits of the chloroplast NAD(P)H dehydrogenase (NDH) complex. Required for the editing of a single site in psbZ. Required for optimal activity of the NDH complex of the photosynthetic electron transport chain. The protein is Pentatricopeptide repeat-containing protein At3g57430, chloroplastic (PCMP-H81) of Arabidopsis thaliana (Mouse-ear cress).